The sequence spans 229 residues: Cytochrome b6-f complex iron-sulfur subunit, chloroplastic (229 aa).

Residues 1 to 50 (MASSSLSPATQLGSSRSALMAMSSGLFVKPTKMNHQMVRKEKIGLRISCQ) constitute a chloroplast transit peptide. A helical transmembrane segment spans residues 68–90 (LNLLLLGALSLPTGYMLVPYATF). Positions 115 to 211 (AAEWLKTHGP…ADIDEAGKVL (97 aa)) constitute a Rieske domain. Positions 157, 159, 175, and 178 each coordinate [2Fe-2S] cluster. A disulfide bridge connects residues Cys162 and Cys177. Ser196 carries the phosphoserine modification.

Belongs to the Rieske iron-sulfur protein family. As to quaternary structure, the 4 large subunits of the cytochrome b6-f complex are cytochrome b6, subunit IV (17 kDa polypeptide, petD), cytochrome f and the Rieske protein, while the 4 small subunits are petG, petL, petM and petN. The complex functions as a dimer. Interacts with PGRL1A. Component of a mitochondrial large protein complex that contains, at least, MIC60, DGS1, TOM40, TOM20 proteins, and petC/RISP. Requires [2Fe-2S] cluster as cofactor. Confined to photosynthetic tissues, with highest levels in flowers. In leaves, mostly localized in mesophyll cells. In stems, confined to the peripheral ring of chlorenchyma and adjoining groups of cells associated with the vascular bundles. In siliques, present in green wall of the fruit and in peduncle but not in the translucide white septum of the seeds.

It is found in the plastid. It localises to the chloroplast thylakoid membrane. Its subcellular location is the mitochondrion inner membrane. It carries out the reaction 2 oxidized [plastocyanin] + a plastoquinol + 2 H(+)(in) = 2 reduced [plastocyanin] + a plastoquinone + 4 H(+)(out). Essential protein for photoautotrophism. Confers resistance to photo-oxidative damages by contributing to the thermal dissipation of light energy and to lumenal acidification (increase of pH gradient). Component of the cytochrome b6-f complex, which mediates electron transfer between photosystem II (PSII) and photosystem I (PSI), cyclic electron flow around PSI, and state transitions. This chain is Cytochrome b6-f complex iron-sulfur subunit, chloroplastic, found in Arabidopsis thaliana (Mouse-ear cress).